The following is a 472-amino-acid chain: Ribosomal protein uS12 methylthiotransferase RimO (472 aa).

The MTTase N-terminal domain maps to 33 to 143 (NRIGFVSLGC…VLKHVHKYVP (111 aa)). [4Fe-4S] cluster-binding residues include Cys42, Cys78, Cys107, Cys175, Cys179, and Cys182. The region spanning 161-398 (LTPKHYAYLK…MEVQAEISAE (238 aa)) is the Radical SAM core domain. Residues 401–467 (ARFVGRTLDI…EHDLWAEVVD (67 aa)) form the TRAM domain.

It belongs to the methylthiotransferase family. RimO subfamily. Requires [4Fe-4S] cluster as cofactor.

Its subcellular location is the cytoplasm. The enzyme catalyses L-aspartate(89)-[ribosomal protein uS12]-hydrogen + (sulfur carrier)-SH + AH2 + 2 S-adenosyl-L-methionine = 3-methylsulfanyl-L-aspartate(89)-[ribosomal protein uS12]-hydrogen + (sulfur carrier)-H + 5'-deoxyadenosine + L-methionine + A + S-adenosyl-L-homocysteine + 2 H(+). Catalyzes the methylthiolation of an aspartic acid residue of ribosomal protein uS12. This is Ribosomal protein uS12 methylthiotransferase RimO from Shewanella baltica (strain OS185).